Here is a 500-residue protein sequence, read N- to C-terminus: 4-alpha-glucanotransferase (500 aa).

It belongs to the disproportionating enzyme family.

It is found in the cytoplasm. It carries out the reaction Transfers a segment of a (1-&gt;4)-alpha-D-glucan to a new position in an acceptor, which may be glucose or a (1-&gt;4)-alpha-D-glucan.. In Thermus thermophilus, this protein is 4-alpha-glucanotransferase (malQ).